A 1115-amino-acid polypeptide reads, in one-letter code: Phytochrome E (1115 aa).

The 171-residue stretch at 213–383 (DIGTLCDTVV…AFSLQLYMEL (171 aa)) folds into the GAF domain. Cys-318 contributes to the phytochromobilin binding site. Residues 598 to 669 (MALELVRLVE…ALMCRALQGE (72 aa)) enclose the PAS 1 domain. A PAC domain is found at 672–728 (RNVEVKLLKFGNHPTKEVVYLVVNACTSRDYKNDIIGVCFVGQDITPEKAVMDKFVR). The PAS 2 domain maps to 732 to 803 (DYEAIIQSLN…DALTKFMILL (72 aa)). The 221-residue stretch at 880–1100 (YIQQQMKNPL…YFLIDLDFKT (221 aa)) folds into the Histidine kinase domain.

This sequence belongs to the phytochrome family. Homodimer. In terms of processing, contains one covalently linked phytochromobilin chromophore.

In terms of biological role, regulatory photoreceptor which exists in two forms that are reversibly interconvertible by light: the Pr form that absorbs maximally in the red region of the spectrum and the Pfr form that absorbs maximally in the far-red region. Photoconversion of Pr to Pfr induces an array of morphogenic responses, whereas reconversion of Pfr to Pr cancels the induction of those responses. Pfr controls the expression of a number of nuclear genes including those encoding the small subunit of ribulose-bisphosphate carboxylase, chlorophyll A/B binding protein, protochlorophyllide reductase, rRNA, etc. It also controls the expression of its own gene(s) in a negative feedback fashion. The protein is Phytochrome E (PHYE) of Ipomoea nil (Japanese morning glory).